Reading from the N-terminus, the 474-residue chain is Protein nucleotidyltransferase YdiU (474 aa).

Residues Gly89, Gly91, Arg92, Lys112, Asp124, Gly125, Arg175, and Arg182 each coordinate ATP. Asp256 (proton acceptor) is an active-site residue. Positions 257 and 266 each coordinate Mg(2+). Residue Asp266 coordinates ATP.

This sequence belongs to the SELO family. Requires Mg(2+) as cofactor. It depends on Mn(2+) as a cofactor.

It catalyses the reaction L-seryl-[protein] + ATP = 3-O-(5'-adenylyl)-L-seryl-[protein] + diphosphate. The enzyme catalyses L-threonyl-[protein] + ATP = 3-O-(5'-adenylyl)-L-threonyl-[protein] + diphosphate. It carries out the reaction L-tyrosyl-[protein] + ATP = O-(5'-adenylyl)-L-tyrosyl-[protein] + diphosphate. The catalysed reaction is L-histidyl-[protein] + UTP = N(tele)-(5'-uridylyl)-L-histidyl-[protein] + diphosphate. It catalyses the reaction L-seryl-[protein] + UTP = O-(5'-uridylyl)-L-seryl-[protein] + diphosphate. The enzyme catalyses L-tyrosyl-[protein] + UTP = O-(5'-uridylyl)-L-tyrosyl-[protein] + diphosphate. Its function is as follows. Nucleotidyltransferase involved in the post-translational modification of proteins. It can catalyze the addition of adenosine monophosphate (AMP) or uridine monophosphate (UMP) to a protein, resulting in modifications known as AMPylation and UMPylation. In Corynebacterium glutamicum (strain R), this protein is Protein nucleotidyltransferase YdiU.